Reading from the N-terminus, the 156-residue chain is ATP synthase subunit b (156 aa).

Residues Val-12–Ala-32 traverse the membrane as a helical segment.

Belongs to the ATPase B chain family. In terms of assembly, F-type ATPases have 2 components, F(1) - the catalytic core - and F(0) - the membrane proton channel. F(1) has five subunits: alpha(3), beta(3), gamma(1), delta(1), epsilon(1). F(0) has three main subunits: a(1), b(2) and c(10-14). The alpha and beta chains form an alternating ring which encloses part of the gamma chain. F(1) is attached to F(0) by a central stalk formed by the gamma and epsilon chains, while a peripheral stalk is formed by the delta and b chains.

It localises to the cell inner membrane. Functionally, f(1)F(0) ATP synthase produces ATP from ADP in the presence of a proton or sodium gradient. F-type ATPases consist of two structural domains, F(1) containing the extramembraneous catalytic core and F(0) containing the membrane proton channel, linked together by a central stalk and a peripheral stalk. During catalysis, ATP synthesis in the catalytic domain of F(1) is coupled via a rotary mechanism of the central stalk subunits to proton translocation. Component of the F(0) channel, it forms part of the peripheral stalk, linking F(1) to F(0). This Pseudomonas putida (strain ATCC 700007 / DSM 6899 / JCM 31910 / BCRC 17059 / LMG 24140 / F1) protein is ATP synthase subunit b.